Here is a 540-residue protein sequence, read N- to C-terminus: Receptor-interacting serine/threonine-protein kinase 2 (540 aa).

Residues 18 to 294 (LADLRYLSRG…KCLIELEPVL (277 aa)) enclose the Protein kinase domain. ATP contacts are provided by residues 24–32 (LSRGASGTV) and Lys47. A helix alphaC region spans residues 65–73 (REAEILHKA). The active-site Proton acceptor is the Asp146. The interval 167 to 193 (LSKWRMMSLSQSRSSKSAPEGGTIVYM) is activation segment (AS). Ser168 carries the post-translational modification Phosphoserine. Ser174 is modified (phosphoserine; alternate). At Ser176 the chain carries Phosphoserine; by autocatalysis. Ser178 is modified (phosphoserine; alternate). Residue Ser180 is modified to Phosphoserine. Ser181 carries the post-translational modification Phosphoserine; alternate. Lys209 is covalently cross-linked (Glycyl lysine isopeptide (Lys-Gly) (interchain with G-Cter in ubiquitin)). The disordered stretch occupies residues 318–367 (SRTVHLSDKKKRELSPNIPVNSGPREESCGSSQLHKTSGSPGTSRSLSAP). Residues 322–331 (HLSDKKKREL) show a composition bias toward basic and acidic residues. The segment covering 346–366 (CGSSQLHKTSGSPGTSRSLSA) has biased composition (polar residues). Residues Ser363 and Ser391 each carry the phosphoserine modification. The 93-residue stretch at 432 to 524 (GIAQQWIQSK…LQPYPEILVL (93 aa)) folds into the CARD domain. Position 472 is a phosphotyrosine; by autocatalysis (Tyr472). Ser525, Ser527, and Ser529 each carry phosphoserine. Lys536 is covalently cross-linked (Glycyl lysine isopeptide (Lys-Gly) (interchain with G-Cter in ubiquitin)). Phosphoserine is present on Ser537.

Belongs to the protein kinase superfamily. TKL Ser/Thr protein kinase family. As to quaternary structure, interacts (via CARD domain) with NOD2 (via CARD domain). Interacts (via CARD domain) with NOD1 (via CARD domain). Homooligomer; following interaction with NOD1 or NOD2, homooligomerizes via its CARD domain and forms long filaments named RIPosomes. Found in a signaling complex consisting of at least ARHGEF2, NOD2 and RIPK2. Interacts with ARHGEF2; the interaction mediates tyrosine phosphorylation of RIPK2 by Src kinase CSK. Interacts with MAP3K4; this interaction sequesters RIPK2 from the NOD2 signaling pathway. Interacts with IKBKG/NEMO. The polyubiquitinated protein interacts with MAP3K7/TAK1; interaction is indirect and is mediated by TAB2 and TAB3 that bind to polyubiquitin chains attached to RIPK2. Binds to CFLAR/CLARP and CASP1 via their CARD domains. Binds to BIRC3/c-IAP1 and BIRC2/c-IAP2, TRAF1, TRAF2, TRAF5 and TRAF6. Interacts with NLRP10. Interacts with CARD9. Interacts with INAVA; the interaction takes place upon PRR stimulation. Interacts (via CARD domain) with NGFR (via death domain). Interacts with IRGM; promoting RIPK2 degradation. Polyubiquitinated via both 'Lys-63'- and 'Met-1'-linked polyubiquitin following recruitment by NOD1 or NOD2, creating docking sites for downstream effectors, triggering activation of the NF-kappa-B and MAP kinases signaling. 'Lys-63'-linked polyubiquitination by XIAP is essential for NOD2 signaling and promotes recruitment of the LUBAC complex. Also polyubiquitinated with 'Lys-63'-linked chains by PELI3, BIRC2/c-IAP1 and BIRC3/c-IAP2. Ubiquitinated on Lys-209 via 'Lys-63'-linked by ITCH. Undergoes 'Lys-63'-linked deubiquitination by MYSM1 to attenuate NOD2-mediated inflammation and tissue damage. Polyubiquitinated with 'Lys-63'-linked chains in response to Shigella infection, promoting its SQSTM1/p62-dependent autophagic degradation. Undergoes 'Met-1'-linked polyubiquitination; the head-to-tail linear polyubiquitination is mediated by the LUBAC complex in response to NOD2 stimulation 'Met-1'-linked polyubiquitination. 'Lys-63'-linked polyubiquitination by XIAP is required for recruimtent of the LUBAC complex and subsequent. Linear polyubiquitination is restricted by FAM105B/otulin, probably to limit NOD2-dependent pro-inflammatory signaling activation of NF-kappa-B. Post-translationally, autophosphorylated. Phosphorylated at Ser-176, either via autophosphorylation or by LRRK2, enhancing activity. Autophosphorylation at Tyr-472 is required for effective NOD2 signaling. Autophosphorylation is however not essential for NOD2 signaling. In terms of processing, degraded via selective autophagy following interaction with IRGM. IRGM promotes NOD1/NOD2-RIPK2 RIPosome recruitment to autophagosome membranes. RIPK2 biquitinated via 'Lys-63'-linked chains is then recognized by SQSTM1/p62, leading to the SQSTM1/p62-dependent autophagic degradation of the NOD1/NOD2-RIPK2 RIPosome.

It localises to the cytoplasm. It is found in the cell membrane. The protein resides in the endoplasmic reticulum. The enzyme catalyses L-seryl-[protein] + ATP = O-phospho-L-seryl-[protein] + ADP + H(+). The catalysed reaction is L-threonyl-[protein] + ATP = O-phospho-L-threonyl-[protein] + ADP + H(+). It carries out the reaction L-tyrosyl-[protein] + ATP = O-phospho-L-tyrosyl-[protein] + ADP + H(+). With respect to regulation, in the inactive state, the helix alphaC is packed against the helical, non-phosphorylated activation segment (AS). Upon activation, helix alphaC is displaced and the phosphorylated AS becomes disordered. Functionally, serine/threonine/tyrosine-protein kinase that plays an essential role in modulation of innate and adaptive immune responses. Acts as a key effector of NOD1 and NOD2 signaling pathways: upon activation by bacterial peptidoglycans, NOD1 and NOD2 oligomerize and recruit RIPK2 via CARD-CARD domains, leading to the formation of RIPK2 filaments. Once recruited, RIPK2 autophosphorylates and undergoes 'Lys-63'-linked polyubiquitination by E3 ubiquitin ligases XIAP, BIRC2 and BIRC3, as well as 'Met-1'-linked (linear) polyubiquitination by the LUBAC complex, becoming a scaffolding protein for downstream effectors. 'Met-1'-linked polyubiquitin chains attached to RIPK2 recruit IKBKG/NEMO, which undergoes 'Lys-63'-linked polyubiquitination in a RIPK2-dependent process. 'Lys-63'-linked polyubiquitin chains attached to RIPK2 serve as docking sites for TAB2 and TAB3 and mediate the recruitment of MAP3K7/TAK1 to IKBKG/NEMO, inducing subsequent activation of IKBKB/IKKB. In turn, NF-kappa-B is released from NF-kappa-B inhibitors and translocates into the nucleus where it activates the transcription of hundreds of genes involved in immune response, growth control, or protection against apoptosis. The protein kinase activity is dispensable for the NOD1 and NOD2 signaling pathways. Contributes to the tyrosine phosphorylation of the guanine exchange factor ARHGEF2 through Src tyrosine kinase leading to NF-kappa-B activation by NOD2. Also involved in adaptive immunity: plays a role during engagement of the T-cell receptor (TCR) in promoting BCL10 phosphorylation and subsequent NF-kappa-B activation. Plays a role in the inactivation of RHOA in response to NGFR signaling. This is Receptor-interacting serine/threonine-protein kinase 2 (RIPK2) from Bos taurus (Bovine).